The following is a 167-amino-acid chain: Peptide deformylase (167 aa).

The Fe cation site is built by cysteine 91 and histidine 133. The active site involves glutamate 134. Histidine 137 lines the Fe cation pocket.

This sequence belongs to the polypeptide deformylase family. Requires Fe(2+) as cofactor.

It carries out the reaction N-terminal N-formyl-L-methionyl-[peptide] + H2O = N-terminal L-methionyl-[peptide] + formate. In terms of biological role, removes the formyl group from the N-terminal Met of newly synthesized proteins. Requires at least a dipeptide for an efficient rate of reaction. N-terminal L-methionine is a prerequisite for activity but the enzyme has broad specificity at other positions. This is Peptide deformylase from Pseudoalteromonas translucida (strain TAC 125).